Here is a 158-residue protein sequence, read N- to C-terminus: MAKKPDNPNYKVIAENRRARFDYAIESDLEVGIILEGSEVKSLRQGQSNIAESYAEVKEGELWLVNSYIAPYVQAKTFGHEEKRRRKMLVSRKELSKLWNATQREGMTLVPIVMYFNHKGLVKLKIGIAKGKKAQDKRETSAKRDWNRQKARLLKQNG.

Basic and acidic residues predominate over residues 133–148; it reads KAQDKRETSAKRDWNR. Residues 133–158 are disordered; sequence KAQDKRETSAKRDWNRQKARLLKQNG. Basic residues predominate over residues 149–158; that stretch reads QKARLLKQNG.

Belongs to the SmpB family.

The protein localises to the cytoplasm. Its function is as follows. Required for rescue of stalled ribosomes mediated by trans-translation. Binds to transfer-messenger RNA (tmRNA), required for stable association of tmRNA with ribosomes. tmRNA and SmpB together mimic tRNA shape, replacing the anticodon stem-loop with SmpB. tmRNA is encoded by the ssrA gene; the 2 termini fold to resemble tRNA(Ala) and it encodes a 'tag peptide', a short internal open reading frame. During trans-translation Ala-aminoacylated tmRNA acts like a tRNA, entering the A-site of stalled ribosomes, displacing the stalled mRNA. The ribosome then switches to translate the ORF on the tmRNA; the nascent peptide is terminated with the 'tag peptide' encoded by the tmRNA and targeted for degradation. The ribosome is freed to recommence translation, which seems to be the essential function of trans-translation. The chain is SsrA-binding protein from Jannaschia sp. (strain CCS1).